The sequence spans 193 residues: MSDDDSRASTSSSSSSSSNQQTEKEGSTPKKKESKVSMSKNSKLLSTSAKRIQKELADITLDPPPNCSAGPKGDNIYEWRSTILGPPGSVYEGGVFFLDITFTPEYPFKPPKVTFRTRIYHCNINSQGVICLDILKDNWSPALTISKVLLSICSLLTDCNPADPLVGSIATQYMTNRAEHDRMARQWTKRYAT.

Residues 1 to 45 form a disordered region; it reads MSDDDSRASTSSSSSSSSNQQTEKEGSTPKKKESKVSMSKNSKLL. The residue at position 2 (serine 2) is an N-acetylserine. Residues 8–18 show a composition bias toward low complexity; it reads ASTSSSSSSSS. Basic and acidic residues predominate over residues 22-35; it reads TEKEGSTPKKKESK. Over residues 36-45 the composition is skewed to polar residues; the sequence is VSMSKNSKLL. The 147-residue stretch at 47–193 folds into the UBC core domain; that stretch reads TSAKRIQKEL…ARQWTKRYAT (147 aa). Cysteine 131 functions as the Glycyl thioester intermediate in the catalytic mechanism. Lysine 136 participates in a covalent cross-link: Glycyl lysine isopeptide (Lys-Gly) (interchain with G-Cter in ISG15).

Belongs to the ubiquitin-conjugating enzyme family. In terms of assembly, interacts with RNF14. In terms of processing, ISGylation suppresses ubiquitin E2 enzyme activity. Post-translationally, autoubiquitinated.

The protein resides in the nucleus. It carries out the reaction S-ubiquitinyl-[E1 ubiquitin-activating enzyme]-L-cysteine + [E2 ubiquitin-conjugating enzyme]-L-cysteine = [E1 ubiquitin-activating enzyme]-L-cysteine + S-ubiquitinyl-[E2 ubiquitin-conjugating enzyme]-L-cysteine.. It catalyses the reaction S-ubiquitinyl-[E1 ubiquitin-activating enzyme]-L-cysteine + [acceptor protein]-L-lysine = [E1 ubiquitin-activating enzyme]-L-cysteine + N(6)-monoubiquitinyl-[acceptor protein]-L-lysine.. It functions in the pathway protein modification; protein ubiquitination. Its function is as follows. Accepts ubiquitin from the E1 complex and catalyzes its covalent attachment to other proteins. Catalyzes the covalent attachment of ISG15 to other proteins. Mediates the selective degradation of short-lived and abnormal proteins. In vitro also catalyzes 'Lys-48'-linked polyubiquitination. The protein is Ubiquitin-conjugating enzyme E2 E1 (Ube2e1) of Mus musculus (Mouse).